A 206-amino-acid polypeptide reads, in one-letter code: Large ribosomal subunit protein uL4 (206 aa).

Belongs to the universal ribosomal protein uL4 family. As to quaternary structure, part of the 50S ribosomal subunit.

Its function is as follows. One of the primary rRNA binding proteins, this protein initially binds near the 5'-end of the 23S rRNA. It is important during the early stages of 50S assembly. It makes multiple contacts with different domains of the 23S rRNA in the assembled 50S subunit and ribosome. Forms part of the polypeptide exit tunnel. The sequence is that of Large ribosomal subunit protein uL4 from Bradyrhizobium sp. (strain BTAi1 / ATCC BAA-1182).